Here is a 200-residue protein sequence, read N- to C-terminus: NAD(P)H-dependent FMN reductase C4B3.06c (200 aa).

FMN-binding positions include Arg22, 96–99 (QYNG), and Tyr126.

In terms of assembly, homodimer.

Its subcellular location is the cytoplasm. The protein localises to the nucleus. It carries out the reaction FMNH2 + NADP(+) = FMN + NADPH + 2 H(+). The catalysed reaction is FMNH2 + NAD(+) = FMN + NADH + 2 H(+). In terms of biological role, has several reductase activities that are NAD(P)H-dependent and involve FMN as a cofactor. May be involved in ferric iron assimilation. The protein is NAD(P)H-dependent FMN reductase C4B3.06c of Schizosaccharomyces pombe (strain 972 / ATCC 24843) (Fission yeast).